The sequence spans 317 residues: Ribonuclease 3-like protein 2 (317 aa).

A disordered region spans residues 1–26; sequence MAPPPAMKPASRKRGPPAPDPVELPP. The segment covering 16-26 has biased composition (pro residues); it reads PPAPDPVELPP. The RNase III domain occupies 37-185; it reads AARVERLLRY…IAAAVYVDCK (149 aa). 3 residues coordinate Mg(2+): glutamate 74, aspartate 171, and glutamate 174. Residues 211–274 form the DRBM domain; that stretch reads QPVTMLHELC…ARDATRKLAG (64 aa).

Mg(2+) is required as a cofactor. The cofactor is Mn(2+).

Cleaves double-stranded RNA (dsRNA). The protein is Ribonuclease 3-like protein 2 of Oryza sativa subsp. japonica (Rice).